The sequence spans 175 residues: Protein-export protein SecB (175 aa).

Residues 154-175 (QQGGNNNGSDSGIILPPGTTRQ) form a disordered region.

This sequence belongs to the SecB family. In terms of assembly, homotetramer, a dimer of dimers. One homotetramer interacts with 1 SecA dimer.

The protein localises to the cytoplasm. Its function is as follows. One of the proteins required for the normal export of preproteins out of the cell cytoplasm. It is a molecular chaperone that binds to a subset of precursor proteins, maintaining them in a translocation-competent state. It also specifically binds to its receptor SecA. This Bordetella petrii (strain ATCC BAA-461 / DSM 12804 / CCUG 43448) protein is Protein-export protein SecB.